We begin with the raw amino-acid sequence, 95 residues long: Integration host factor subunit beta (95 aa).

Residues 56-76 (RAPRTGRNPKTGTSVELDGKY) form a disordered region.

It belongs to the bacterial histone-like protein family. Heterodimer of an alpha and a beta chain.

This protein is one of the two subunits of integration host factor, a specific DNA-binding protein that functions in genetic recombination as well as in transcriptional and translational control. In Shewanella woodyi (strain ATCC 51908 / MS32), this protein is Integration host factor subunit beta.